The sequence spans 295 residues: Sulfotransferase 1A3 (295 aa).

Residue 48 to 53 (KSGTTW) participates in 3'-phosphoadenylyl sulfate binding. Dopamine-binding positions include aspartate 86 and 106 to 108 (KSH). The active-site Proton acceptor is histidine 108. 2 residues coordinate 3'-phosphoadenylyl sulfate: arginine 130 and serine 138. Glutamate 146 is a binding site for dopamine. 3'-phosphoadenylyl sulfate is bound by residues tyrosine 193, 227 to 232 (TSFKEM), and 257 to 259 (RKG).

This sequence belongs to the sulfotransferase 1 family. In terms of assembly, homodimer. Post-translationally, the N-terminus is blocked. Liver, colon, kidney, lung, brain, spleen, small intestine, placenta and leukocyte.

It is found in the cytoplasm. The enzyme catalyses a phenol + 3'-phosphoadenylyl sulfate = an aryl sulfate + adenosine 3',5'-bisphosphate + H(+). It catalyses the reaction 4-nitrophenol + 3'-phosphoadenylyl sulfate = 4-nitrophenyl sulfate + adenosine 3',5'-bisphosphate. The catalysed reaction is dopamine + 3'-phosphoadenylyl sulfate = dopamine 3-O-sulfate + adenosine 3',5'-bisphosphate + H(+). It carries out the reaction dopamine + 3'-phosphoadenylyl sulfate = dopamine 4-O-sulfate + adenosine 3',5'-bisphosphate + H(+). The enzyme catalyses serotonin + 3'-phosphoadenylyl sulfate = serotonin O-sulfate + adenosine 3',5'-bisphosphate + H(+). It catalyses the reaction (R)-adrenaline + 3'-phosphoadenylyl sulfate = (R)-adrenaline 4'-O-sulfate + adenosine 3',5'-bisphosphate + H(+). The catalysed reaction is (R)-noradrenaline + 3'-phosphoadenylyl sulfate = (R)-noradrenaline 4'-O-sulfate + adenosine 3',5'-bisphosphate + H(+). It carries out the reaction 3,3',5-triiodo-L-thyronine + 3'-phosphoadenylyl sulfate = 3,3',5-triiodo-L-thyronine sulfate + adenosine 3',5'-bisphosphate + H(+). The enzyme catalyses 3,3',5'-triiodo-L-thyronine + 3'-phosphoadenylyl sulfate = 3,3',5'-triiodo-L-thyronine sulfate + adenosine 3',5'-bisphosphate + H(+). It catalyses the reaction 3,3'-diiodo-L-thyronine + 3'-phosphoadenylyl sulfate = 3,3'-diiodo-L-thyronine sulfate + adenosine 3',5'-bisphosphate + H(+). The catalysed reaction is L-thyroxine + 3'-phosphoadenylyl sulfate = L-thyroxine sulfate + adenosine 3',5'-bisphosphate + H(+). In terms of biological role, sulfotransferase that utilizes 3'-phospho-5'-adenylyl sulfate (PAPS) as sulfonate donor to catalyze the sulfate conjugation of phenolic monoamines (neurotransmitters such as dopamine, (R)-adrenaline/epinephrine, (R)-noradrenaline/norepinephrine and serotonin) and phenolic and catechol drugs. Catalyzes the sulfation of T4 (L-thyroxine/3,5,3',5'-tetraiodothyronine), T3 (3,5,3'-triiodothyronine), rT3 (3,3',5'-triiodothyronine) and 3,3'-T2 (3,3'-diiodothyronine), with a substrate preference of 3,3'-T2 &gt; rT3 &gt; T3 &gt; T4. This Homo sapiens (Human) protein is Sulfotransferase 1A3 (SULT1A3).